We begin with the raw amino-acid sequence, 127 residues long: Ycf91-like protein (127 aa).

The protein belongs to the ycf91 family.

The polypeptide is Ycf91-like protein (Nostoc sp. (strain PCC 7120 / SAG 25.82 / UTEX 2576)).